The chain runs to 688 residues: UvrABC system protein B (688 aa).

The 384-residue stretch at 31–414 folds into the Helicase ATP-binding domain; sequence GRITAGETDV…LGIADGVVEQ (384 aa). 44–51 serves as a coordination point for ATP; that stretch reads GATGTGKS. The Beta-hairpin signature appears at 97–120; the sequence is YYDYYQPEAYVPQTDTFIEKDSSI. The Helicase C-terminal domain maps to 434–600; sequence QIDDLLEEIR…PLRKRIADIT (167 aa). Residues 614 to 633 form a disordered region; sequence LAGRDQKRKSPTPSLRSGGI. Residues 642 to 677 form the UVR domain; the sequence is ESLIADLNAQMLAAAGELKFELAARLRDELSDLKRD.

The protein belongs to the UvrB family. Forms a heterotetramer with UvrA during the search for lesions. Interacts with UvrC in an incision complex.

The protein localises to the cytoplasm. Functionally, the UvrABC repair system catalyzes the recognition and processing of DNA lesions. A damage recognition complex composed of 2 UvrA and 2 UvrB subunits scans DNA for abnormalities. Upon binding of the UvrA(2)B(2) complex to a putative damaged site, the DNA wraps around one UvrB monomer. DNA wrap is dependent on ATP binding by UvrB and probably causes local melting of the DNA helix, facilitating insertion of UvrB beta-hairpin between the DNA strands. Then UvrB probes one DNA strand for the presence of a lesion. If a lesion is found the UvrA subunits dissociate and the UvrB-DNA preincision complex is formed. This complex is subsequently bound by UvrC and the second UvrB is released. If no lesion is found, the DNA wraps around the other UvrB subunit that will check the other stand for damage. This Leifsonia xyli subsp. xyli (strain CTCB07) protein is UvrABC system protein B.